We begin with the raw amino-acid sequence, 342 residues long: N-acetyl-gamma-glutamyl-phosphate reductase (342 aa).

Cysteine 149 is a catalytic residue.

It belongs to the NAGSA dehydrogenase family. Type 1 subfamily.

It is found in the cytoplasm. The enzyme catalyses N-acetyl-L-glutamate 5-semialdehyde + phosphate + NADP(+) = N-acetyl-L-glutamyl 5-phosphate + NADPH + H(+). It functions in the pathway amino-acid biosynthesis; L-arginine biosynthesis; N(2)-acetyl-L-ornithine from L-glutamate: step 3/4. In terms of biological role, catalyzes the NADPH-dependent reduction of N-acetyl-5-glutamyl phosphate to yield N-acetyl-L-glutamate 5-semialdehyde. This Nitrosomonas europaea (strain ATCC 19718 / CIP 103999 / KCTC 2705 / NBRC 14298) protein is N-acetyl-gamma-glutamyl-phosphate reductase.